The primary structure comprises 375 residues: Ornithine carbamoyltransferase, chloroplastic (375 aa).

Residues 123 to 126, arginine 174, histidine 201, and glutamine 204 contribute to the carbamoyl phosphate site; that span reads SMRT. Asparagine 232, aspartate 293, serine 297, and methionine 298 together coordinate L-ornithine. Cysteine 333 acts as the Proton acceptor in catalysis. Carbamoyl phosphate is bound by residues 333-334 and arginine 361; that span reads CL.

This sequence belongs to the aspartate/ornithine carbamoyltransferase superfamily. OTCase family. Homotrimer.

It is found in the plastid. It localises to the chloroplast. It carries out the reaction carbamoyl phosphate + L-ornithine = L-citrulline + phosphate + H(+). This Pisum sativum (Garden pea) protein is Ornithine carbamoyltransferase, chloroplastic (ARGF).